Reading from the N-terminus, the 428-residue chain is Proteinase-activated receptor 1 (428 aa).

The N-terminal stretch at 1–21 (MGPQRLLLVAAGLSLCGPLLS) is a signal peptide. A propeptide spans 22 to 41 (SRVPVRQPESEMTDATVNPR) (removed for receptor activation). At 42-105 (SFFLRNPGEN…SGYLTSPWLR (64 aa)) the chain is on the extracellular side. N-linked (GlcNAc...) asparagine glycans are attached at residues Asn-65 and Asn-78. A helical membrane pass occupies residues 106–131 (LFIPSVYTFVFVVSLPLNILAIAVFV). Residues 132–140 (LKMKVKKPA) lie on the Cytoplasmic side of the membrane. Residues 141–160 (VVYMLHLAMADVLFVSVLPL) traverse the membrane as a helical segment. The Extracellular portion of the chain corresponds to 161-179 (KISYYFSGSDWQFGSGMCR). Residues Cys-178 and Cys-257 are joined by a disulfide bond. The chain crosses the membrane as a helical span at residues 180 to 201 (FATAAFYCNMYASIMLMTVISI). Residues 202 to 221 (DRFLAVVYPIQSLSWRTLGR) are Cytoplasmic-facing. The chain crosses the membrane as a helical span at residues 222 to 242 (ANFTCLVIWVMAIMGVVPLLL). Residues 243–271 (KEQTTRVPGLNITTCHDVLNETLLQGFYS) lie on the Extracellular side of the membrane. N-linked (GlcNAc...) asparagine glycans are attached at residues Asn-253 and Asn-262. A helical membrane pass occupies residues 272 to 291 (YYFSAFSAVFFLVPLIISTI). Topologically, residues 292–314 (CYMSIIRCLSSSSVANRSKKSRA) are cytoplasmic. The chain crosses the membrane as a helical span at residues 315–337 (LFLSAAVFCVFIVCFGPTNVLLI). At 338 to 352 (MHYLLLSDSPATEKA) the chain is on the extracellular side. A helical transmembrane segment spans residues 353–377 (YFAYLLCVCVSSVSCCIDPLIYYYA). Topologically, residues 378-428 (SSECQRHLYGILCCKESSDPNSYNSTGQLMPSKMDTCSSHLNNSIYKKLLA) are cytoplasmic. Position 421 is a phosphoserine (Ser-421).

The protein belongs to the G-protein coupled receptor 1 family. Proteolytic cleavage by thrombin generates a new N-terminus that functions as a tethered ligand. Also proteolytically cleaved by cathepsin CTSG. In terms of processing, phosphorylated in the C-terminal tail; probably mediating desensitization prior to the uncoupling and internalization of the receptor.

Its subcellular location is the cell membrane. In terms of biological role, high affinity receptor that binds the activated thrombin, leading to calcium release from intracellular stores. The thrombin-activated receptor signaling pathway is mediated through PTX-insensitive G proteins, activation of phospholipase C resulting in the production of 1D-myo-inositol 1,4,5-trisphosphate (InsP3) which binds to InsP3 receptors causing calcium release from the stores. In astrocytes, the calcium released into the cytosol allows the Ca(2+)-dependent release of L-glutamate into the synaptic cleft through BEST1, that targets the neuronal postsynaptic GRIN2A/NMDAR receptor resulting in the synaptic plasticity regulation. May play a role in platelets activation and in vascular development. Mediates up-regulation of pro-inflammatory cytokines, such as MCP-1/CCL2 and IL6, triggered by coagulation factor Xa (F10) in cardiac fibroblasts and umbilical vein endothelial cells. The polypeptide is Proteinase-activated receptor 1 (Cricetulus longicaudatus (Long-tailed dwarf hamster)).